Here is a 649-residue protein sequence, read N- to C-terminus: Exolysin (649 aa).

Residues 37–57 (LIYTIIVLVVAAVVGLVIFIV) form a helical membrane-spanning segment. The stretch at 184-268 (KDIIDNKLRE…KKATDDFKKK (85 aa)) forms a coiled coil. The segment covering 258-275 (AKKATDDFKKKKQADKNK) has biased composition (basic and acidic residues). Residues 258 to 325 (AKKATDDFKK…QFQTRDSKGQ (68 aa)) are disordered. Positions 278–312 (ASKPSPGPKPAPKPSPGPKPAPKPSPGPKPSPGPS) are enriched in pro residues. The interval 407 to 649 (GGGGGGGNVS…KNVKISKWSP (243 aa)) is catalytic.

Ca(2+) is required as a cofactor. Requires Mg(2+) as cofactor.

The protein resides in the membrane. Its subcellular location is the virion. With respect to regulation, inhibited by Mn(2+), Cu(2+), Co(2+), Fe(2+), Zn(2+), Ni(2+), EDTA and EGTA. During viral entry, involved in the degradation of the host cell wall at the site of attachment. The sequence is that of Exolysin from Chlorella (PBCV-1).